A 724-amino-acid polypeptide reads, in one-letter code: Methionine--tRNA ligase (724 aa).

The short motif at 12 to 22 is the 'HIGH' region element; that stretch reads PYVNNIPHLGN. Residues C143, C146, C155, and C158 each coordinate Zn(2+). A 'KMSKS' region motif is present at residues 330-334; sequence KFSKS. Position 333 (K333) interacts with ATP. The 106-residue stretch at 560–665 folds into the tRNA-binding domain; sequence FREKVLLRVV…KNPIAGERII (106 aa).

This sequence belongs to the class-I aminoacyl-tRNA synthetase family. MetG type 1 subfamily. As to quaternary structure, homodimer. Requires Zn(2+) as cofactor.

It is found in the cytoplasm. It carries out the reaction tRNA(Met) + L-methionine + ATP = L-methionyl-tRNA(Met) + AMP + diphosphate. Functionally, is required not only for elongation of protein synthesis but also for the initiation of all mRNA translation through initiator tRNA(fMet) aminoacylation. The chain is Methionine--tRNA ligase from Borreliella afzelii (strain PKo) (Borrelia afzelii).